We begin with the raw amino-acid sequence, 444 residues long: Serine--tRNA ligase (444 aa).

An L-serine-binding site is contributed by threonine 243–glutamate 245. Arginine 274–glutamate 276 provides a ligand contact to ATP. Glutamate 297 lines the L-serine pocket. Glutamate 361 to serine 364 contacts ATP. Residue serine 397 coordinates L-serine.

The protein belongs to the class-II aminoacyl-tRNA synthetase family. Type-1 seryl-tRNA synthetase subfamily. Homodimer. The tRNA molecule binds across the dimer.

The protein resides in the cytoplasm. The enzyme catalyses tRNA(Ser) + L-serine + ATP = L-seryl-tRNA(Ser) + AMP + diphosphate + H(+). It catalyses the reaction tRNA(Sec) + L-serine + ATP = L-seryl-tRNA(Sec) + AMP + diphosphate + H(+). It participates in aminoacyl-tRNA biosynthesis; selenocysteinyl-tRNA(Sec) biosynthesis; L-seryl-tRNA(Sec) from L-serine and tRNA(Sec): step 1/1. Its function is as follows. Catalyzes the attachment of serine to tRNA(Ser). Is also able to aminoacylate tRNA(Sec) with serine, to form the misacylated tRNA L-seryl-tRNA(Sec), which will be further converted into selenocysteinyl-tRNA(Sec). In Acidobacterium capsulatum (strain ATCC 51196 / DSM 11244 / BCRC 80197 / JCM 7670 / NBRC 15755 / NCIMB 13165 / 161), this protein is Serine--tRNA ligase.